A 249-amino-acid polypeptide reads, in one-letter code: Transcription repressor MYB5 (249 aa).

2 consecutive HTH myb-type domains span residues 20-72 (KMGM…MNYL) and 73-127 (RPSV…RKKL). DNA-binding regions (H-T-H motif) lie at residues 48–72 (WRSL…MNYL) and 100–123 (WSLI…NTHL). The interval 133–180 (DPQTHKPLDANNIHKPEEEVSGGQKYPLEPISSSHTDDTTVNGGDGDS) is disordered. The span at 135–150 (QTHKPLDANNIHKPEE) shows a compositional bias: basic and acidic residues.

Interacts with BHLH002/EGL3/MYC146, BHLH012/MYC1 and BHLH042/TT8. In terms of tissue distribution, siliques.

The protein localises to the nucleus. Transcription activator, when associated with BHLH002/EGL3/MYC146, BHLH012/MYC1 or BHLH042/TT8. The polypeptide is Transcription repressor MYB5 (MYB5) (Arabidopsis thaliana (Mouse-ear cress)).